Consider the following 434-residue polypeptide: UDP-N-acetylmuramate--L-alanine ligase (434 aa).

Residue 110–116 coordinates ATP; it reads GAHGKTS.

Belongs to the MurCDEF family.

It localises to the cytoplasm. The catalysed reaction is UDP-N-acetyl-alpha-D-muramate + L-alanine + ATP = UDP-N-acetyl-alpha-D-muramoyl-L-alanine + ADP + phosphate + H(+). Its pathway is cell wall biogenesis; peptidoglycan biosynthesis. In terms of biological role, cell wall formation. This chain is UDP-N-acetylmuramate--L-alanine ligase, found in Limosilactobacillus reuteri (strain DSM 20016) (Lactobacillus reuteri).